The following is a 665-amino-acid chain: Phosphatidylinositol-3-phosphate phosphatase MTMR1 (665 aa).

Met-1 carries the N-acetylmethionine modification. The span at Met-1–Gly-11 shows a compositional bias: low complexity. Positions Met-1–Thr-51 are disordered. Residues Cys-12–Gly-24 are compositionally biased toward gly residues. A compositionally biased stretch (polar residues) spans Ser-39–Thr-51. Ser-43 and Ser-49 each carry phosphoserine. The region spanning Asn-90–Gly-161 is the GRAM domain. Positions Gly-226 to Tyr-601 constitute a Myotubularin phosphatase domain. 3 residues coordinate a 1,2-diacyl-sn-glycero-3-phospho-(1D-myo-inositol-3-phosphate): Asn-351, Asn-376, and Ile-377. The active-site Phosphocysteine intermediate is the Cys-438. 7 residues coordinate a 1,2-diacyl-sn-glycero-3-phospho-(1D-myo-inositol-3-phosphate): Ser-439, Asp-440, Gly-441, Trp-442, Asp-443, Arg-444, and Arg-484. Ser-439 provides a ligand contact to phosphate. Gly-441, Trp-442, Asp-443, and Arg-444 together coordinate phosphate. Residues Met-608–Val-665 form a required for dimerization region. The tract at residues Arg-642–Val-665 is disordered. Residues Ser-645–Ser-657 are compositionally biased toward low complexity.

The protein belongs to the protein-tyrosine phosphatase family. Non-receptor class myotubularin subfamily. Homodimer.

Its subcellular location is the cell membrane. It is found in the cytoplasm. The enzyme catalyses a 1,2-diacyl-sn-glycero-3-phospho-(1D-myo-inositol-3-phosphate) + H2O = a 1,2-diacyl-sn-glycero-3-phospho-(1D-myo-inositol) + phosphate. It catalyses the reaction 1,2-dioctanoyl-sn-glycero-3-phospho-(1-D-myo-inositol-3-phosphate) + H2O = 1,2-dioctanoyl-sn-glycero-3-phospho-(1D-myo-inositol) + phosphate. It carries out the reaction a 1,2-diacyl-sn-glycero-3-phospho-(1D-myo-inositol-3,5-bisphosphate) + H2O = a 1,2-diacyl-sn-glycero-3-phospho-(1D-myo-inositol-5-phosphate) + phosphate. Its function is as follows. Lipid phosphatase that specifically dephosphorylates the D-3 position of phosphatidylinositol 3-phosphate, generating phosphatidylinositol. Could also dephosphorylate phosphatidylinositol 3,5-bisphosphate to produce phosphatidylinositol 5-phosphate. The sequence is that of Phosphatidylinositol-3-phosphate phosphatase MTMR1 from Homo sapiens (Human).